A 266-amino-acid polypeptide reads, in one-letter code: Thymidylate synthase (266 aa).

DUMP is bound at residue Arg24. His54 serves as a coordination point for (6R)-5,10-methylene-5,6,7,8-tetrahydrofolate. 129–130 (RR) is a dUMP binding site. The active-site Nucleophile is Cys149. DUMP-binding positions include 169–172 (RSAD), Asn180, and 210–212 (HIY). Asp172 contacts (6R)-5,10-methylene-5,6,7,8-tetrahydrofolate. Ala265 contributes to the (6R)-5,10-methylene-5,6,7,8-tetrahydrofolate binding site.

Belongs to the thymidylate synthase family. Bacterial-type ThyA subfamily. In terms of assembly, homodimer.

It is found in the cytoplasm. It catalyses the reaction dUMP + (6R)-5,10-methylene-5,6,7,8-tetrahydrofolate = 7,8-dihydrofolate + dTMP. It participates in pyrimidine metabolism; dTTP biosynthesis. In terms of biological role, catalyzes the reductive methylation of 2'-deoxyuridine-5'-monophosphate (dUMP) to 2'-deoxythymidine-5'-monophosphate (dTMP) while utilizing 5,10-methylenetetrahydrofolate (mTHF) as the methyl donor and reductant in the reaction, yielding dihydrofolate (DHF) as a by-product. This enzymatic reaction provides an intracellular de novo source of dTMP, an essential precursor for DNA biosynthesis. The chain is Thymidylate synthase from Mycobacterium bovis (strain ATCC BAA-935 / AF2122/97).